Consider the following 338-residue polypeptide: Acetylcholinesterase (338 aa).

N-linked (GlcNAc...) asparagine glycosylation occurs at Asn-8. The Acyl-ester intermediate role is filled by Ser-99. The cysteines at positions 153 and 164 are disulfide-linked. Catalysis depends on Glu-226, which acts as the Charge relay system.

The protein belongs to the type-B carboxylesterase/lipase family.

It is found in the synapse. It localises to the secreted. Its subcellular location is the cell membrane. The enzyme catalyses acetylcholine + H2O = choline + acetate + H(+). Its function is as follows. Terminates signal transduction at the neuromuscular junction by rapid hydrolysis of the acetylcholine released into the synaptic cleft. This chain is Acetylcholinesterase (ache), found in Myxine glutinosa (Atlantic hagfish).